Here is a 217-residue protein sequence, read N- to C-terminus: 3,4-dihydroxy-2-butanone 4-phosphate synthase (217 aa).

D-ribulose 5-phosphate-binding positions include Arg-37 to Glu-38, Asp-42, Arg-150 to Thr-154, and Glu-174. Glu-38 contacts Mg(2+). A Mg(2+)-binding site is contributed by His-153.

The protein belongs to the DHBP synthase family. As to quaternary structure, homodimer. Mg(2+) is required as a cofactor. It depends on Mn(2+) as a cofactor.

The catalysed reaction is D-ribulose 5-phosphate = (2S)-2-hydroxy-3-oxobutyl phosphate + formate + H(+). It participates in cofactor biosynthesis; riboflavin biosynthesis; 2-hydroxy-3-oxobutyl phosphate from D-ribulose 5-phosphate: step 1/1. Catalyzes the conversion of D-ribulose 5-phosphate to formate and 3,4-dihydroxy-2-butanone 4-phosphate. This Aeromonas salmonicida (strain A449) protein is 3,4-dihydroxy-2-butanone 4-phosphate synthase.